The following is a 172-amino-acid chain: Macro domain-containing protein lp_3408 (172 aa).

The region spanning 1-171 (MVEIKVIHGD…VFSTALAALT (171 aa)) is the Macro domain.

This sequence belongs to the MacroD-type family.

In Lactiplantibacillus plantarum (strain ATCC BAA-793 / NCIMB 8826 / WCFS1) (Lactobacillus plantarum), this protein is Macro domain-containing protein lp_3408.